Here is a 316-residue protein sequence, read N- to C-terminus: Melanocyte-stimulating hormone receptor (316 aa).

Topologically, residues 1 to 37 are extracellular; the sequence is MPMQGAHRKLLGSLNSTPTATSNLGLAANHTGAPCLE. N29 carries an N-linked (GlcNAc...) asparagine glycan. The chain crosses the membrane as a helical span at residues 38 to 63; that stretch reads VSIPDGLFLSLGLVSLVENVLVVAAI. Topologically, residues 64 to 72 are cytoplasmic; sequence AKNRNLHSS. A helical membrane pass occupies residues 73–93; sequence MYCFICCLALSDLLVSGSNML. The Extracellular portion of the chain corresponds to 94-118; the sequence is ETAVILLLEAGALATRTSVVQQLHN. A helical membrane pass occupies residues 119–140; that stretch reads TIDVLTCSSMLCSLCFLGAIAV. Over 141–163 the chain is Cytoplasmic; sequence DRYISIFYALRYHSIMTLPRAQR. Residues 164–183 traverse the membrane as a helical segment; that stretch reads AIAAIWVASVLSSTLFITYY. The Extracellular segment spans residues 184–191; it reads DHAAVLLC. The chain crosses the membrane as a helical span at residues 192-211; that stretch reads LVVFFLAMLVLMAVLYVHML. Residues 212-240 lie on the Cytoplasmic side of the membrane; it reads ARACQHAHGIIRLHKRQSPAHQGFGLRGA. A helical membrane pass occupies residues 241–266; the sequence is ATLTILLGIFFLCWGPFFLHLTLVVF. Residues 267-279 are Extracellular-facing; the sequence is CPQHLTCSCIFKN. A helical transmembrane segment spans residues 280 to 300; it reads FKVFLTLIICNTIIDPLIYAF. Topologically, residues 301–316 are cytoplasmic; it reads RSQELRRTLKEVLCSW. C314 carries S-palmitoyl cysteine lipidation.

Belongs to the G-protein coupled receptor 1 family. In terms of assembly, interacts with MGRN1, but does not undergo MGRN1-mediated ubiquitination; this interaction competes with GNAS-binding and thus inhibits agonist-induced cAMP production. Interacts with OPN3; the interaction results in a decrease in MC1R-mediated cAMP signaling and ultimately a decrease in melanin production in melanocytes.

Its subcellular location is the cell membrane. In terms of biological role, receptor for MSH (alpha, beta and gamma) and ACTH. The activity of this receptor is mediated by G proteins which activate adenylate cyclase. Mediates melanogenesis, the production of eumelanin (black/brown) and phaeomelanin (red/yellow), via regulation of cAMP signaling in melanocytes. The protein is Melanocyte-stimulating hormone receptor (MC1R) of Leontocebus fuscicollis (Brown-mantled tamarin).